The chain runs to 398 residues: MAKLTVKDVDLKGKKVLVRVDFNVPLKDGVITNDNRITAALPTIKYIIEQGGRAILFSHLGRVKEEADKAGKSLAPVAADLAAKLGQDVVFPGVTRGAELEAAINVLEDGQVLLVENTRYEDVDGXKESKNDPELGKYWASLGDGIFVNDAFGTAHRAHASNVGISANVEKAVAGFLLENEIAYIQEAVETPERPFVAILGGSKVSDKIGVIENLLEKADKVLIGGGMTYTFYKAQGIEIGNSLVEEDKLDVAKALLEKANGKLILPVDSKEANAFAGYTEVRDTEGEAVSEGFLGLDIGPKSIAKFDEALTGAKTVVWNGPMGVFENPDFQAGTIGVMDAIVKQPGVKSIIGGGDSAAAAINLGRADKFSWISTGGGASMELLEGKVLPGLAALTEK.

Substrate is bound by residues 21–23 (DFN), Arg36, 59–62 (HLGR), Arg119, and Arg157. ATP is bound by residues Lys208, Gly296, Glu327, and 354-357 (GGDS).

It belongs to the phosphoglycerate kinase family. In terms of assembly, monomer.

The protein resides in the cytoplasm. The enzyme catalyses (2R)-3-phosphoglycerate + ATP = (2R)-3-phospho-glyceroyl phosphate + ADP. It functions in the pathway carbohydrate degradation; glycolysis; pyruvate from D-glyceraldehyde 3-phosphate: step 2/5. This Streptococcus pneumoniae serotype 19F (strain G54) protein is Phosphoglycerate kinase.